We begin with the raw amino-acid sequence, 101 residues long: UPF0235 protein MmarC6_1603 (101 aa).

Belongs to the UPF0235 family.

The chain is UPF0235 protein MmarC6_1603 from Methanococcus maripaludis (strain C6 / ATCC BAA-1332).